Here is a 193-residue protein sequence, read N- to C-terminus: uncharacterized protein (193 aa).

The first 26 residues, 1-26 (MRNVFVGALCMCGMSFVFSDSVRSAA), serve as a signal peptide directing secretion.

This is an uncharacterized protein from Treponema pallidum (strain Nichols).